We begin with the raw amino-acid sequence, 62 residues long: Ponericin-W-like 32.2 (62 aa).

A signal peptide spans 1 to 23; the sequence is MKCKKQLLVIFFAYFLVVNESEA. Positions 49–62 are excised as a propeptide; it reads RALMKRDLEDIMDP.

The protein belongs to the non-disulfide-bridged peptide (NDBP) superfamily. Medium-length antimicrobial peptide (group 3) family. Ponericin-W subfamily. In terms of tissue distribution, expressed by the venom gland.

The protein resides in the secreted. It localises to the target cell membrane. In terms of biological role, antimicrobial peptide with potent activity against a range of Gram-positive and Gram-negative bacteria. Has high hemolytic activity against erythrocytes. May act by disrupting the integrity of the bacterial cell membrane. In Lychas mucronatus (Chinese swimming scorpion), this protein is Ponericin-W-like 32.2.